Reading from the N-terminus, the 261-residue chain is Small ribosomal subunit protein uS2 (261 aa).

The disordered stretch occupies residues 222-261; it reads GKALREQDGEANEEQPISEEEKKEVLEEAMSEEDFEGDKE. 2 stretches are compositionally biased toward acidic residues: residues 230–239 and 248–261; these read GEANEEQPIS and EEAMSEEDFEGDKE.

This sequence belongs to the universal ribosomal protein uS2 family.

This Campylobacter lari (strain RM2100 / D67 / ATCC BAA-1060) protein is Small ribosomal subunit protein uS2.